Consider the following 204-residue polypeptide: Large ribosomal subunit protein eL15 (204 aa).

It belongs to the eukaryotic ribosomal protein eL15 family. In terms of assembly, component of the large ribosomal subunit.

The protein localises to the cytoplasm. Component of the large ribosomal subunit. The ribosome is a large ribonucleoprotein complex responsible for the synthesis of proteins in the cell. This is Large ribosomal subunit protein eL15 (rpl15) from Silurus meridionalis (Southern catfish).